The sequence spans 421 residues: MGQTITEKIFSEHVGREVKAGEIVECELDMIIGNDITTPISIKAFRDSGAKKLAKPDNFAIVLDHFIPAKDIASANQAKISREFAYEHNLKHFFDEKDMGIEHALLPEKGLVVPGDVIIGADSHTCTHGALGAFATGMGSTDLAYGMITGKNWFKVPPSIKVIYTGKLGEHVYGKDLILELIRRIGVDGALYKALEFTGDTIENLDMDGRFSLCNMAIEAGAKNGIIAVDEVTKAFLADKPLAREPKIHYSDEDAEYEQVIEIDVNNLEPVIAFPHLPSNGRPISEAAKMDLKVDQVFIGSCTNGRLSDIAIAAEILKGRKVARHTRMIVTPATQKILKEAEKRGYIDILIDAGAVVSNPTCGACLGGYMGILADNERCVSTTNRNFVGRMGARTSEIYLANSAVAAASAVAGKIADPREL.

Cys-302, Cys-362, and Cys-365 together coordinate [4Fe-4S] cluster.

Belongs to the aconitase/IPM isomerase family. LeuC type 2 subfamily. As to quaternary structure, heterodimer of LeuC and LeuD. The cofactor is [4Fe-4S] cluster.

The enzyme catalyses (2R,3S)-3-isopropylmalate = (2S)-2-isopropylmalate. It participates in amino-acid biosynthesis; L-leucine biosynthesis; L-leucine from 3-methyl-2-oxobutanoate: step 2/4. Functionally, catalyzes the isomerization between 2-isopropylmalate and 3-isopropylmalate, via the formation of 2-isopropylmaleate. The sequence is that of 3-isopropylmalate dehydratase large subunit from Nitratiruptor sp. (strain SB155-2).